Reading from the N-terminus, the 592-residue chain is ATP-dependent RNA helicase DBP3 (592 aa).

Positions 1–146 are disordered; that stretch reads MGKRPIEDDA…AGSYTEHTEL (146 aa). Positions 19–31 are enriched in basic residues; that stretch reads KKSKKEKSGKSKK. The span at 73–82 shows a compositional bias: basic and acidic residues; it reads EAKEASKAGK. The span at 97-108 shows a compositional bias: basic residues; it reads AARKAARKAEKK. A compositionally biased stretch (polar residues) spans 116 to 141; it reads TASSAPTEASSVPAQTLSSSNAGSYT. Residues 179–206 carry the Q motif motif; that stretch reads VNFKYLPVTDESQRAPFAGFTAPTPIQA. In terms of domain architecture, Helicase ATP-binding spans 209–382; it reads WPFLLSGRDM…STFMVSPVRI (174 aa). 222–229 contacts ATP; the sequence is AETGSGKT. The DEAD box signature appears at 330-333; sequence DEAD. The 150-residue stretch at 413-562 folds into the Helicase C-terminal domain; it reads RLLQLLKQYQ…EVPEELLKFG (150 aa).

Belongs to the DEAD box helicase family. DDX5/DBP2 subfamily.

Its subcellular location is the nucleus. It localises to the nucleolus. It carries out the reaction ATP + H2O = ADP + phosphate + H(+). Its function is as follows. ATP-dependent RNA helicase required for 60S ribosomal subunit synthesis. Involved in efficient pre-rRNA processing, predominantly at site A3, which is necessary for the normal formation of 25S and 5.8S rRNAs. The sequence is that of ATP-dependent RNA helicase DBP3 (DBP3) from Phaeosphaeria nodorum (strain SN15 / ATCC MYA-4574 / FGSC 10173) (Glume blotch fungus).